The following is a 156-amino-acid chain: 3-hydroxyacyl-[acyl-carrier-protein] dehydratase FabZ (156 aa).

His-57 is a catalytic residue.

The protein belongs to the thioester dehydratase family. FabZ subfamily.

It is found in the cytoplasm. It catalyses the reaction a (3R)-hydroxyacyl-[ACP] = a (2E)-enoyl-[ACP] + H2O. In terms of biological role, involved in unsaturated fatty acids biosynthesis. Catalyzes the dehydration of short chain beta-hydroxyacyl-ACPs and long chain saturated and unsaturated beta-hydroxyacyl-ACPs. This is 3-hydroxyacyl-[acyl-carrier-protein] dehydratase FabZ from Anaeromyxobacter dehalogenans (strain 2CP-C).